A 1040-amino-acid chain; its full sequence is Multidrug resistance protein MdtB (1040 aa).

12 helical membrane-spanning segments follow: residues 16–36, 347–367, 369–389, 396–416, 440–460, 472–492, 537–557, 863–883, 888–908, 911–931, 968–988, and 998–1018; these read FIMR…AGII, LMMA…NIPA, IIPG…MVFL, LTLM…IVVI, IGFT…PLLF, FAIT…TLTP, WLTL…WVFI, LGST…VLGI, FIHP…ALLA, IAGS…IGIV, ILMT…STGV, and IGMV…TPVI.

The protein belongs to the resistance-nodulation-cell division (RND) (TC 2.A.6) family. MdtB subfamily. Part of a tripartite efflux system composed of MdtA, MdtB and MdtC. MdtB forms a heteromultimer with MdtC.

Its subcellular location is the cell inner membrane. Functionally, the MdtABC tripartite complex confers resistance against novobiocin and deoxycholate. The chain is Multidrug resistance protein MdtB from Escherichia coli O45:K1 (strain S88 / ExPEC).